We begin with the raw amino-acid sequence, 562 residues long: Glucocorticoid modulatory element-binding protein 1 (562 aa).

Position 2 is an N-acetylalanine (Ala-2). One can recognise an SAND domain in the interval 72-156; that stretch reads ASSIEANEDM…RKMMDSGQID (85 aa). Cys-103 is a binding site for Zn(2+). Residues Lys-129, Lys-133, Lys-136, and Arg-147 each contribute to the DNA site. His-160, Cys-164, and Cys-168 together coordinate Zn(2+). Residues 311 to 357 are a coiled coil; the sequence is LDNRRKQVEHGEEQFLYTLADLERQLEEQKKQAQDPRLKSQTVQNVV. The segment at 360 to 384 is disordered; it reads PVSTPKPPKRPRLQRPASTTVLSPS. The segment covering 375 to 384 has biased composition (polar residues); sequence PASTTVLSPS.

In terms of assembly, homodimer, and heterodimer of GMEB1 and GMEB2. Interacts with the glucocorticoid receptor (NR3C1) and NCOA2/TIF2. May interact with HSP27 and CREB-binding protein (CBP). Interacts with TRIM63.

It is found in the nucleus. It localises to the cytoplasm. In terms of biological role, trans-acting factor that binds to glucocorticoid modulatory elements (GME) present in the TAT (tyrosine aminotransferase) promoter and increases sensitivity to low concentrations of glucocorticoids. Also binds to the transferrin receptor promoter. This chain is Glucocorticoid modulatory element-binding protein 1 (Gmeb1), found in Rattus norvegicus (Rat).